The chain runs to 574 residues: uncharacterized protein (574 aa).

This is an uncharacterized protein from Homo sapiens (Human).